The primary structure comprises 277 residues: Putative thiosulfate sulfurtransferase (277 aa).

Rhodanese domains lie at 18 to 125 (HAPK…PLSS) and 154 to 274 (AINV…APIE). Residue C233 is the Cysteine persulfide intermediate of the active site. R238 serves as a coordination point for substrate.

The enzyme catalyses thiosulfate + hydrogen cyanide = thiocyanate + sulfite + 2 H(+). Functionally, may be a sulfotransferase involved in the formation of thiosulfate. This is Putative thiosulfate sulfurtransferase (cysA1) from Mycobacterium tuberculosis (strain CDC 1551 / Oshkosh).